The chain runs to 325 residues: Lipid droplet-associated hydrolase (325 aa).

Ser-139 serves as the catalytic Nucleophile. Active-site charge relay system residues include Asp-271 and His-300.

The protein belongs to the AB hydrolase superfamily. LDAH family.

Its subcellular location is the lipid droplet. It localises to the endoplasmic reticulum. It catalyses the reaction a cholesterol ester + H2O = cholesterol + a fatty acid + H(+). Its function is as follows. Probable serine lipid hydrolase associated with lipid droplets. Has low cholesterol esterase activity. Appears to lack triglyceride lipase activity. Involved in cholesterol and triglyceride homeostasis; stimulates cellular triglyceride accumulation and cellular cholesterol release. Acts antagonistically with PNPLA2/ATGL in regulation of cellular lipid stores. May regulate triglyceride accumulation indirectly through stimulation of PNPLA2/ATGL ubiquitination and proteasomal degradation. Promotes microtubule-dependent lipid droplet fusion. Highly expressed in macrophage-rich areas in atherosclerotic lesions, suggesting that it could promote cholesterol ester turnover in macrophages. The polypeptide is Lipid droplet-associated hydrolase (Rattus norvegicus (Rat)).